Consider the following 962-residue polypeptide: pH-response regulator protein palF/prr-3 (962 aa).

Disordered stretches follow at residues 1–43 (MGPF…DSST), 225–326 (APPK…THPS), 568–675 (TDSN…PDEN), and 689–962 (RLLP…RYER). Residues 237 to 246 (ISKRAKKKRP) are compositionally biased toward basic residues. 3 stretches are compositionally biased toward polar residues: residues 297–307 (GFSQAPRSVSH), 314–326 (SGDS…THPS), and 581–596 (PSLT…SNYV). 2 stretches are compositionally biased toward low complexity: residues 696–722 (PIAA…PDSS) and 738–747 (PTPAATPATA). The span at 793-805 (TEDKQELERRRLL) shows a compositional bias: basic and acidic residues. The span at 830–839 (AGPSGSRAGP) shows a compositional bias: low complexity. Residues 840-849 (SAPPPAPPVA) are compositionally biased toward pro residues. The segment covering 913-928 (PSSPVLAPASAFFPAS) has biased composition (low complexity). Residues 929–949 (GSGNVHDSPREQGQQARSDSS) are compositionally biased toward polar residues.

The protein belongs to the arrestin family. PalF/RIM8 subfamily.

Functionally, required for the proteolytic cleavage of the transcription factor pacc-1 in response to alkaline ambient pH. In Neurospora crassa (strain ATCC 24698 / 74-OR23-1A / CBS 708.71 / DSM 1257 / FGSC 987), this protein is pH-response regulator protein palF/prr-3 (prr-3).